The following is a 62-amino-acid chain: Ranacyclin-T (62 aa).

An N-terminal signal peptide occupies residues 1–22; that stretch reads MFTMKKTLLVLFFLGVVSLSLC. The propeptide occupies 23 to 43; it reads VEERDADEEDGGEVMEEEVKR. Cysteines 49 and 59 form a disulfide. Residue K60 is modified to Lysine amide.

The protein belongs to the frog skin active peptide (FSAP) family. Brevinin subfamily. As to expression, expressed by the skin granular glands.

The protein localises to the secreted. In terms of biological role, has antibacterial activity against Gram-positive bacteria B.megaterium Bm11, S.lentus and M.luteus, and Gram-negative bacteria E.coli D22, Y.pseudotuberculosis YP III and P.syringae pv tabaci, and antifungal activity against C.albicans ATCC 10231, C.tropicalis, C.guiller-mondii and P.nicotianae spores. Has weak hemolytic activity. The mature peptide inserts into the hydrophobic core of the bacterial cell membrane and increases permeability without disrupting membrane integrity. Probably binds to the outer membrane surface before aggregating to form transmembrane pores. The protein is Ranacyclin-T (RNCT) of Rana temporaria (European common frog).